We begin with the raw amino-acid sequence, 328 residues long: scyllo-inositol 2-dehydrogenase (NADP(+)) IolU (328 aa).

The protein belongs to the Gfo/Idh/MocA family.

The enzyme catalyses scyllo-inositol + NADP(+) = scyllo-inosose + NADPH + H(+). In terms of biological role, catalyzes the NADPH-dependent reduction of scyllo-inosose (SIS) to scyllo-inositol (SI) in vitro, but is unable to dehydrogenate scyllo-inositol and myo-inositol. Is less efficient than the functional paralog IolW. Under physiological conditions, may primarily function as an NADPH-dependent oxidoreductase that reduces carbonyl group(s) in its substrates. Cannot use NADH instead of NADPH. The protein is scyllo-inositol 2-dehydrogenase (NADP(+)) IolU of Bacillus subtilis (strain 168).